The following is a 418-amino-acid chain: Delta(14)-sterol reductase TM7SF2 (418 aa).

Helical transmembrane passes span 13-35 (FGGP…HLLL), 62-81 (ALLL…LLPA), 102-124 (GFQA…LPLG), 129-148 (MLLP…SLLL), 255-277 (FGFM…QAQF), and 287-304 (LPMA…YYIF). NADP(+)-binding positions include Lys-311, Arg-315, Leu-338, Trp-343, and 350–351 (NY). Residues 355-377 (LIMALAWSLPCGLSHLLPYFYVL) traverse the membrane as a helical segment. Residues Asp-390, 394–398 (CLQKY), and Tyr-405 each bind NADP(+).

This sequence belongs to the ERG4/ERG24 family. As to expression, strongly expressed in liver, weaker in ovary, testis, kidney and brain.

The protein resides in the endoplasmic reticulum membrane. Its subcellular location is the microsome membrane. It catalyses the reaction 4,4-dimethyl-5alpha-cholesta-8,24-dien-3beta-ol + NADP(+) = 4,4-dimethyl-5alpha-cholesta-8,14,24-trien-3beta-ol + NADPH + H(+). The enzyme catalyses 5alpha-cholest-8,14-dien-3beta-ol + NADPH + H(+) = 5alpha-cholest-8-en-3beta-ol + NADP(+). The catalysed reaction is 4,4-dimethyl-8,14-cholestadien-3beta-ol + NADPH + H(+) = 4,4-dimethyl-5alpha-cholest-8-en-3beta-ol + NADP(+). It functions in the pathway steroid biosynthesis; cholesterol biosynthesis. Functionally, catalyzes the reduction of the C14-unsaturated bond of lanosterol, as part of the metabolic pathway leading to cholesterol biosynthesis. This Mus musculus (Mouse) protein is Delta(14)-sterol reductase TM7SF2 (Tm7sf2).